The sequence spans 249 residues: uncharacterized protein (249 aa).

The protein resides in the cytoplasm. Its subcellular location is the nucleus. This is an uncharacterized protein from Schizosaccharomyces pombe (strain 972 / ATCC 24843) (Fission yeast).